The following is a 125-amino-acid chain: uncharacterized protein (125 aa).

Residues 50–73 (QTSDFSDESSRSDSSSVTNENEVS) are disordered.

This is an uncharacterized protein from Microplitis demolitor (Parasitoid wasp).